The chain runs to 1169 residues: MNKILEKIQNNTTILIEASAGTGKTHILENVVINLIKTKLYSINEILVLTFTKKATEEMHTRILKVIENAYSNSKTNEILKEAYEQSKKLFISTINKFALHALNNFQIETENYSKYKPKEKFSKEIDEIVYDFLRKSDSLIQALDIKDYELKVFKSDAKKTEEIVLKIKKAYERDTTQELGDWLKTQTAFENILLKKEELIKDYNKIIEDLDKMTKDEILSFYNKHIQTGKLEIEYSKENDIFKIAETLLKNKFFSTLIEKETKKNSKLSPKELKIKNDLICLGINIKHEKYKSEDNRNKNRNNLKQYVILKVEYKILKYIEKELKKTIKSTNTIDQNYIISNLKNYLKSEDKKLLNAIKNRYKIILIDEAQDLSLIQIEIFKILKTAGIKLIFIADPKQIIYSFRKADISFYNKEIKNKINTDARIVLKINHRSSKKLIGPLNKIFNNIYNNAIADEIEKIDFTNSLPNQKNDNNKIVINGQEIEGINIITTNTESEEDIYQKTALTIKYLLAYGKIAENNKIRNIKMQDIKVLCRGKNEINLIDKALKKEQIQTNKTQEKFLKTKEFSEIFYIIKCLDRKQSFKTLNYILSSKILNVPWNLQRILIKQDKICLIEEFIENIIVLLEKNEITLINAINKITFEKNLWIKIANITKDQKIIEWAKNKINYKGLLIKEGKLENLKTYETTLEIISKIYHKEQNIQSLISTLESLIINEEPEEIEEKINNINNDNESIELMTIHKSKGLGMNIVFLLNTTPIENSNFFSKKNQFYKFYQDGKIEYDFFKLEENKKYARLKILSEEKNIFYVGATRAKFALFIIKINSITSKLLEIAKIFTIDDIKHDFNIHEFIGQKRFNKKKYNTNVNTKLIPPKPIIKNMFKKEYTSSFSSLTAQAHHKEFYENYDFKNINYEKETELDYEPGLEETLPKGKDIGNILHAAMEEIIFSTAKDTFDNFKKNNIEIIEKQIQKINSNLNTIEIQNSLAKMIYNILTYNIRAINTRLCDIEELQKEMEFLIKINPEFQKQKYLFDKHFEDLHIKLSDGYLKGIVDLIFKANNKIYILDYKTNYLGKNKEDYNITNLENTIKKEYYDLQYKIYALGIKKILFKNKKEYNQKFGGIIYLFTRAFEDNIECLKSKFENGIYFNLPKFNDVDLDKIILELGIKRHL.

One can recognise a UvrD-like helicase ATP-binding domain in the interval 1-436; that stretch reads MNKILEKIQN…IVLKINHRSS (436 aa). A DNA-binding and helicase activity, interacts with RecC region spans residues 1–839; the sequence is MNKILEKIQN…LLEIAKIFTI (839 aa). ATP is bound at residue 18 to 25; the sequence is ASAGTGKT. The UvrD-like helicase C-terminal domain maps to 459–746; sequence IEKIDFTNSL…ELMTIHKSKG (288 aa). The tract at residues 883-1169 is nuclease activity, interacts with RecD and RecA; the sequence is KEYTSSFSSL…ILELGIKRHL (287 aa). 3 residues coordinate Mg(2+): H939, D1052, and D1065. The active-site For nuclease activity is D1065.

It belongs to the helicase family. UvrD subfamily. Heterotrimer of RecB, RecC and RecD. All subunits contribute to DNA-binding. Interacts with RecA. Mg(2+) serves as cofactor.

It catalyses the reaction Exonucleolytic cleavage (in the presence of ATP) in either 5'- to 3'- or 3'- to 5'-direction to yield 5'-phosphooligonucleotides.. The catalysed reaction is Couples ATP hydrolysis with the unwinding of duplex DNA by translocating in the 3'-5' direction.. It carries out the reaction ATP + H2O = ADP + phosphate + H(+). A helicase/nuclease that prepares dsDNA breaks (DSB) for recombinational DNA repair. Binds to DSBs and unwinds DNA via a highly rapid and processive ATP-dependent bidirectional helicase activity. Unwinds dsDNA until it encounters a Chi (crossover hotspot instigator) sequence from the 3' direction. Cuts ssDNA a few nucleotides 3' to the Chi site. The properties and activities of the enzyme are changed at Chi. The Chi-altered holoenzyme produces a long 3'-ssDNA overhang and facilitates RecA-binding to the ssDNA for homologous DNA recombination and repair. Holoenzyme degrades any linearized DNA that is unable to undergo homologous recombination. In the holoenzyme this subunit contributes ATPase, 3'-5' helicase, exonuclease activity and loads RecA onto ssDNA. This is RecBCD enzyme subunit RecB from Borreliella burgdorferi (strain ATCC 35210 / DSM 4680 / CIP 102532 / B31) (Borrelia burgdorferi).